The sequence spans 616 residues: Chaperone protein HscA (616 aa).

The protein belongs to the heat shock protein 70 family.

Its function is as follows. Chaperone involved in the maturation of iron-sulfur cluster-containing proteins. Has a low intrinsic ATPase activity which is markedly stimulated by HscB. Involved in the maturation of IscU. The sequence is that of Chaperone protein HscA from Pectobacterium atrosepticum (strain SCRI 1043 / ATCC BAA-672) (Erwinia carotovora subsp. atroseptica).